We begin with the raw amino-acid sequence, 237 residues long: Chloride intracellular channel protein 3 (237 aa).

Residues 1–89 (MAETTKLQLF…EEFLEETLGP (89 aa)) are required for insertion into the membrane. Residues 13–91 (ASEDGESVGH…FLEETLGPPD (79 aa)) enclose the GST N-terminal domain. The G-site motif lies at 23–26 (CPSC). C23 and C26 form a disulfide bridge. Residues 25–45 (SCQRLFMVLLLKGVPFTLTTV) form a helical membrane-spanning segment. The region spanning 69–236 (DGDVKTDTLQ…LAAYQPAVHP (168 aa)) is the GST C-terminal domain. A Phosphoserine modification is found at S160.

The protein belongs to the chloride channel CLIC family. Associated with the C-terminal of MAPK15.

The protein localises to the nucleus. It localises to the membrane. It is found in the cell membrane. Its subcellular location is the cytoplasm. The protein resides in the secreted. The protein localises to the extracellular space. It localises to the extracellular matrix. The catalysed reaction is chloride(in) = chloride(out). Its function is as follows. In the soluble state, catalyzes glutaredoxin-like thiol disulfide exchange reactions with reduced glutathione as electron donor. Reduced in a glutathione-dependent way and secreted into the extracellular matrix where it activates TGM2 and promotes blood vessel growth during tissue remodeling as occurs in tumorigenesis. Can reduce specific cysteines in TGM2 and regulate cofactor binding. Can insert into membranes and form outwardly rectifying chloride ion channels. May participate in cellular growth control. The chain is Chloride intracellular channel protein 3 from Mus musculus (Mouse).